The primary structure comprises 955 residues: Kinesin-like protein K39 (955 aa).

One can recognise a Kinesin motor domain in the interval 12–392 (RVKVSVRVRP…LRYASRARDI (381 aa)). Residue 122-129 (GQTGSGKT) participates in ATP binding. Residues 426 to 955 (PAYVSELKKK…EERAAELASQ (530 aa)) adopt a coiled-coil conformation. Disordered stretches follow at residues 682 to 712 (ELDAAASTSQNARESACERLTSLEQQLRESE) and 725 to 955 (TAAA…LASQ). Repeat copies occupy residues 704–742 (LEQQLRESEERAAELASQLEATAAAKSSAEQDRENTRAT), 743–781 (LEQQLRESEARAAELASQLEATAAAKMSAEQDRENTRAT), 782–820 (LEQQLRDSEERAAELASQLESTTAAKMSAEQDRESTRAT), 821–859 (LEQQLRDSEERAAELASQLESTTAAKMSAEQDRESTRAT), 860–898 (LEQQLRESEERAAELASQLESTTAAKMSAEQDRESTRAT), 899–937 (LEQQLRDSEERAAELASQLEATAAAKSSAEQDRENTRAA), and 938–955 (LEQQLRDSEERAAELASQ). Residues 704–955 (LEQQLRESEE…EERAAELASQ (252 aa)) form a 7 X 39 AA approximate tandem repeats region. 5 stretches are compositionally biased toward basic and acidic residues: residues 785-794 (QLRDSEERAA), 824-833 (QLRDSEERAA), 863-872 (QLRESEERAA), 902-911 (QLRDSEERAA), and 941-955 (QLRDSEERAAELASQ).

Belongs to the TRAFAC class myosin-kinesin ATPase superfamily. Kinesin family.

The protein localises to the cytoplasm. The protein resides in the cytoskeleton. The polypeptide is Kinesin-like protein K39 (KIN) (Leishmania chagasi).